Consider the following 344-residue polypeptide: Ferredoxin--NADP reductase (344 aa).

Residues Ser-12, Asp-31, Lys-39, Tyr-43, Val-83, Ile-118, Asp-285, and Ser-326 each contribute to the FAD site.

Belongs to the ferredoxin--NADP reductase type 2 family. Homodimer. It depends on FAD as a cofactor.

The enzyme catalyses 2 reduced [2Fe-2S]-[ferredoxin] + NADP(+) + H(+) = 2 oxidized [2Fe-2S]-[ferredoxin] + NADPH. The protein is Ferredoxin--NADP reductase of Staphylococcus aureus (strain MW2).